Here is a 749-residue protein sequence, read N- to C-terminus: Signal transducer and activator of transcription 4 (749 aa).

Residues 570–665 (WIDGYIMGFV…ENPLKYLYPD (96 aa)) enclose the SH2 domain. At lysine 668 the chain carries N6-acetyllysine. At tyrosine 694 the chain carries Phosphotyrosine; by JAK. The residue at position 722 (serine 722) is a Phosphoserine.

It belongs to the transcription factor STAT family. In terms of assembly, forms a homodimer or a heterodimer with a related family member. Interacts with ARL2BP. Interacts with STAT1. Interacts with JUN; this complex efficiently interacts with the AP-1-related sequence of the IFN-gamma promoter. Post-translationally, acetylation at Lys-668 is required for JAK2-mediated phosphorylation and activation of STAT4. In terms of processing, tyrosine phosphorylated upon IL12 and IFN-alpha activation, but not by IFN-gamma in T-lymphocytes and NK cells. Serine phosphorylation is required for maximal transcriptional activity but not for DNA binding. Phosphorylation by MAP2K6 at Ser-722 is required for full transcriptional activity induced by IL12. However this serine phosphorylation is not required for cell proliferation although critical for IFN-gamma production. As to expression, expression is restricted to testis, thymus, and spleen.

The protein resides in the cytoplasm. It is found in the nucleus. Functionally, transcriptional regulator mainly expressed in hematopoietic cells that plays a critical role in cellular growth, differentiation and immune response. Plays a key role in the differentiation of T-helper 1 cells and the production of interferon-gamma. Also participates in multiple neutrophil functions including chemotaxis and production of the neutrophil extracellular traps. After IL12 binding to its receptor IL12RB2, STAT4 interacts with the intracellular domain of IL12RB2 and becomes tyrosine phosphorylated. Phosphorylated STAT4 then homodimerizes and migrates to the nucleus where it can recognize STAT target sequences present in IL12 responsive genes. Although IL12 appears to be the predominant activating signal, STAT4 can also be phosphorylated and activated in response to IFN-gamma stimulation via JAK1 and TYK2 and in response to different interleukins including IL23, IL2 and IL35. Transcription activation of IFN-gamma gene is mediated by interaction with JUN that forms a complex that efficiently interacts with the AP-1-related sequence of the IFN-gamma promoter. In response to IFN-alpha/beta signaling, acts as a transcriptional repressor and suppresses IL5 and IL13 mRNA expression during response to T-cell receptor (TCR) activation. This is Signal transducer and activator of transcription 4 (Stat4) from Mus musculus (Mouse).